The sequence spans 1154 residues: DNA-directed RNA polymerase, mitochondrial (1154 aa).

The N-terminal 30 residues, 1-30 (MLRRKIQTYLSRSHIRRGLCGLRFFQTQRL), are a transit peptide targeting the mitochondrion. Residues 221–243 (ESENGKDQNGDSSLKEKQPDVET) are disordered. Residues 223–240 (ENGKDQNGDSSLKEKQPD) are compositionally biased toward basic and acidic residues. Active-site residues include Asp-821, Lys-890, and Asp-1061.

The protein belongs to the phage and mitochondrial RNA polymerase family.

It is found in the mitochondrion. The enzyme catalyses RNA(n) + a ribonucleoside 5'-triphosphate = RNA(n+1) + diphosphate. Its function is as follows. DNA-dependent RNA polymerase catalyzes the transcription of DNA into RNA using the four ribonucleoside triphosphates as substrates. Combines in the mitochondrion with mitochondrial transcription factor mtf1 as a holoenzyme to recognize and initiate transcription at the core mitochondrial promoters. The sequence is that of DNA-directed RNA polymerase, mitochondrial (rpo41) from Schizosaccharomyces pombe (strain 972 / ATCC 24843) (Fission yeast).